The following is a 436-amino-acid chain: GTPase Der (436 aa).

EngA-type G domains lie at 4–167 (PTVA…PVEE) and 175–351 (IRFS…ESQN). GTP-binding positions include 10–17 (GRPNVGKS), 57–61 (DTGGI), 119–122 (NKVD), 181–188 (GRPNVGKS), 229–233 (DTAGM), and 294–297 (NKWD). One can recognise a KH-like domain in the interval 352-436 (KRIPSAVLND…PIHLIARKRK (85 aa)).

The protein belongs to the TRAFAC class TrmE-Era-EngA-EngB-Septin-like GTPase superfamily. EngA (Der) GTPase family. As to quaternary structure, associates with the 50S ribosomal subunit.

Functionally, GTPase that plays an essential role in the late steps of ribosome biogenesis. This chain is GTPase Der, found in Streptococcus pyogenes serotype M1.